Consider the following 123-residue polypeptide: Chaperone protein SycN (123 aa).

In terms of assembly, interacts with YscB to form a complex which specifically binds to YopN.

It localises to the cytoplasm. It is found in the cell inner membrane. Functions as a specific chaperone for YopN. It could facilitate the secretion and the subsequent translocation of YopN. This is Chaperone protein SycN (sycN) from Yersinia enterocolitica.